A 516-amino-acid polypeptide reads, in one-letter code: Histidine ammonia-lyase (516 aa).

Residues 143-145 constitute a cross-link (5-imidazolinone (Ala-Gly)); the sequence is ASG. Serine 144 is modified (2,3-didehydroalanine (Ser)).

Belongs to the PAL/histidase family. Contains an active site 4-methylidene-imidazol-5-one (MIO), which is formed autocatalytically by cyclization and dehydration of residues Ala-Ser-Gly.

The protein resides in the cytoplasm. It catalyses the reaction L-histidine = trans-urocanate + NH4(+). It functions in the pathway amino-acid degradation; L-histidine degradation into L-glutamate; N-formimidoyl-L-glutamate from L-histidine: step 1/3. This Koribacter versatilis (strain Ellin345) protein is Histidine ammonia-lyase.